We begin with the raw amino-acid sequence, 91 residues long: Em-like protein (91 aa).

2 stretches are compositionally biased toward basic and acidic residues: residues 1-18 (MEQQ…REGE) and 31-51 (DAQE…KEQI). Residues 1–91 (MEQQQDRREL…PIDESKYRHP (91 aa)) form a disordered region. Over residues 62 to 73 (KGGLSSAGGPGG) the composition is skewed to gly residues. The segment covering 75–91 (RASEEGRPIDESKYRHP) has biased composition (basic and acidic residues).

It belongs to the small hydrophilic plant seed protein family.

The sequence is that of Em-like protein from Picea glauca (White spruce).